A 378-amino-acid chain; its full sequence is Spermidine/putrescine import ATP-binding protein PotA (378 aa).

Positions 18–248 (VQLAGIRKCF…PKNLFVAGFI (231 aa)) constitute an ABC transporter domain. 50-57 (GPSGCGKT) serves as a coordination point for ATP.

This sequence belongs to the ABC transporter superfamily. Spermidine/putrescine importer (TC 3.A.1.11.1) family. In terms of assembly, the complex is composed of two ATP-binding proteins (PotA), two transmembrane proteins (PotB and PotC) and a solute-binding protein (PotD).

It localises to the cell inner membrane. It catalyses the reaction ATP + H2O + polyamine-[polyamine-binding protein]Side 1 = ADP + phosphate + polyamineSide 2 + [polyamine-binding protein]Side 1.. Part of the ABC transporter complex PotABCD involved in spermidine/putrescine import. Responsible for energy coupling to the transport system. This chain is Spermidine/putrescine import ATP-binding protein PotA, found in Escherichia coli O1:K1 / APEC.